Reading from the N-terminus, the 257-residue chain is Pyridoxine 5'-phosphate synthase (257 aa).

Asparagine 6 contacts 3-amino-2-oxopropyl phosphate. 8-9 (DH) contributes to the 1-deoxy-D-xylulose 5-phosphate binding site. Arginine 17 lines the 3-amino-2-oxopropyl phosphate pocket. Catalysis depends on histidine 41, which acts as the Proton acceptor. 1-deoxy-D-xylulose 5-phosphate-binding residues include arginine 43 and histidine 48. The Proton acceptor role is filled by glutamate 68. Threonine 98 provides a ligand contact to 1-deoxy-D-xylulose 5-phosphate. Histidine 210 acts as the Proton donor in catalysis. Residues glycine 211 and 232–233 (GQ) each bind 3-amino-2-oxopropyl phosphate.

The protein belongs to the PNP synthase family. As to quaternary structure, homooctamer; tetramer of dimers.

The protein localises to the cytoplasm. The enzyme catalyses 3-amino-2-oxopropyl phosphate + 1-deoxy-D-xylulose 5-phosphate = pyridoxine 5'-phosphate + phosphate + 2 H2O + H(+). Its pathway is cofactor biosynthesis; pyridoxine 5'-phosphate biosynthesis; pyridoxine 5'-phosphate from D-erythrose 4-phosphate: step 5/5. Functionally, catalyzes the complicated ring closure reaction between the two acyclic compounds 1-deoxy-D-xylulose-5-phosphate (DXP) and 3-amino-2-oxopropyl phosphate (1-amino-acetone-3-phosphate or AAP) to form pyridoxine 5'-phosphate (PNP) and inorganic phosphate. The polypeptide is Pyridoxine 5'-phosphate synthase (Campylobacter jejuni subsp. doylei (strain ATCC BAA-1458 / RM4099 / 269.97)).